The sequence spans 760 residues: DEAD-box ATP-dependent RNA helicase 24 (760 aa).

Disordered stretches follow at residues 1-76 (MSNR…GEVD) and 90-113 (QEMK…DDDD). The span at 14–27 (NRQTSYSFERSQAP) shows a compositional bias: polar residues. The span at 41–64 (NSEDADLDNIDYMENEEAEEDIEE) shows a compositional bias: acidic residues. The span at 99 to 109 (KPKEKLERYKD) shows a compositional bias: basic and acidic residues. S160 is subject to Phosphoserine. The Q motif signature appears at 228-256 (KTFEDCGFSSQIMSAIKKQAYEKPTAIQC). In terms of domain architecture, Helicase ATP-binding spans 259–434 (LPIVLSGRDV…REILSDPIRV (176 aa)). An ATP-binding site is contributed by 272-279 (AKTGSGKT). The DEAD box signature appears at 382 to 385 (DEAD). The Helicase C-terminal domain maps to 459-608 (KLPWLLEKLP…NVPPELTDLA (150 aa)). Disordered regions lie at residues 604-638 (LTDL…KGVR), 647-666 (GFSS…SRSG), and 706-760 (FVSG…GWDN). A compositionally biased stretch (basic residues) spans 615 to 628 (KSKRDGRKGGKKGR). Gly residues predominate over residues 629–638 (GGGGGNKGVR). Over residues 649-666 (SSESSRTPSSKAAPSRSG) the composition is skewed to polar residues. Positions 707–716 (VSGGTIGGDM) are enriched in gly residues. A compositionally biased stretch (polar residues) spans 718 to 732 (RTQSQAPPVAPTQNA). Positions 733–745 (SSHNSSQNHSQSS) are enriched in low complexity. A compositionally biased stretch (basic residues) spans 750 to 760 (RERKRRSGWDN).

It belongs to the DEAD box helicase family.

It carries out the reaction ATP + H2O = ADP + phosphate + H(+). The sequence is that of DEAD-box ATP-dependent RNA helicase 24 (RH24) from Arabidopsis thaliana (Mouse-ear cress).